A 633-amino-acid chain; its full sequence is ATP-dependent RNA helicase mrh4, mitochondrial (633 aa).

The N-terminal 38 residues, 1–38 (MNRLGRLSLPLRPQVCLLCQTQATMSSPLAGWQAVRSM), are a transit peptide targeting the mitochondrion. Residues 50–115 (MVLSSNVDKS…KQKPDSPLYK (66 aa)) form a disordered region. The span at 52–63 (LSSNVDKSSLKQ) shows a compositional bias: polar residues. Over residues 98–109 (RSGDSEDDKQKP) the composition is skewed to basic and acidic residues. The short motif at 142 to 175 (SSFDQFPLLPVVRHSISSQALSRTGDIVPTPIQR) is the Q motif element. The region spanning 195 to 407 (SDHEPNFEQY…RKRYPDIRRL (213 aa)) is the Helicase ATP-binding domain. 208–215 (AETGSGKT) lines the ATP pocket. The short motif at 354–357 (DEAD) is the DEAD box element. The region spanning 458 to 633 (FLAQAGPKVK…EGMFRGQALI (176 aa)) is the Helicase C-terminal domain.

Belongs to the DEAD box helicase family. MRH4 subfamily.

Its subcellular location is the mitochondrion. It catalyses the reaction ATP + H2O = ADP + phosphate + H(+). ATP-binding RNA helicase involved in mitochondrial RNA metabolism. Required for maintenance of mitochondrial DNA. This chain is ATP-dependent RNA helicase mrh4, mitochondrial (mrh4), found in Aspergillus niger (strain ATCC MYA-4892 / CBS 513.88 / FGSC A1513).